We begin with the raw amino-acid sequence, 135 residues long: ATP synthase epsilon chain (135 aa).

Belongs to the ATPase epsilon chain family. As to quaternary structure, F-type ATPases have 2 components, CF(1) - the catalytic core - and CF(0) - the membrane proton channel. CF(1) has five subunits: alpha(3), beta(3), gamma(1), delta(1), epsilon(1). CF(0) has three main subunits: a, b and c.

Its subcellular location is the cell inner membrane. Produces ATP from ADP in the presence of a proton gradient across the membrane. This Chelativorans sp. (strain BNC1) protein is ATP synthase epsilon chain.